The chain runs to 333 residues: Phenylalanine--tRNA ligase alpha subunit (333 aa).

E254 contacts Mg(2+).

The protein belongs to the class-II aminoacyl-tRNA synthetase family. Phe-tRNA synthetase alpha subunit type 1 subfamily. Tetramer of two alpha and two beta subunits. The cofactor is Mg(2+).

The protein resides in the cytoplasm. It carries out the reaction tRNA(Phe) + L-phenylalanine + ATP = L-phenylalanyl-tRNA(Phe) + AMP + diphosphate + H(+). The chain is Phenylalanine--tRNA ligase alpha subunit from Xylella fastidiosa (strain M23).